The sequence spans 300 residues: PTB domain-containing engulfment adapter protein 1 (300 aa).

The 156-residue stretch at 21 to 176 folds into the PID domain; that stretch reads AKHFIPYNAK…GGLQKRIQDL (156 aa). The stretch at 160–199 forms a coiled coil; the sequence is VETRKQIGGLQKRIQDLETENVELKKQLQVLEEQLMIAQV.

The protein belongs to the ced-6 family.

It localises to the cytoplasm. May function as an adapter protein. Required for efficient phagocytosis of apoptotic cells. May play a role in the internalization and endosomal trafficking of various lrp1 ligands. The protein is PTB domain-containing engulfment adapter protein 1 (gulp1) of Danio rerio (Zebrafish).